We begin with the raw amino-acid sequence, 151 residues long: Transcriptional repressor NrdR (151 aa).

A zinc finger spans residues 3–34 (CPYCAYGESKVVDSRSTEDGSSIRRRRECLKC). The 91-residue stretch at 49-139 (ILVIKKNMSR…VYRQFKDINT (91 aa)) folds into the ATP-cone domain.

It belongs to the NrdR family. It depends on Zn(2+) as a cofactor.

Functionally, negatively regulates transcription of bacterial ribonucleotide reductase nrd genes and operons by binding to NrdR-boxes. This chain is Transcriptional repressor NrdR, found in Clostridium botulinum (strain ATCC 19397 / Type A).